The following is a 349-amino-acid chain: Phospho-N-acetylmuramoyl-pentapeptide-transferase (349 aa).

The next 10 helical transmembrane spans lie at 13 to 33 (LFFSLALTGMTTLVLTVSLGV), 69 to 89 (GGGVLLFISLIASLLVWLPWG), 91 to 111 (FSTWFFIILLTCYAGLGWYDD), 129 to 149 (FMVQIAIAAFTLIALPYIYGS), 165 to 185 (LSLPFWLGKVFCLGLALVAII), 197 to 217 (LDGLAAGTMSFAALGFIFVAL), 228 to 248 (VAYVLAALVGACIGFLWYNGF), 252 to 272 (LFMGDTGSLLLGGLLGSCAVM), 278 to 298 (ILVVIGGVFVAEAGSVILQVL), and 327 to 347 (IVMRFWIFSFVCAGLGIAAVL).

The protein belongs to the glycosyltransferase 4 family. MraY subfamily. It depends on Mg(2+) as a cofactor.

It localises to the cell inner membrane. The enzyme catalyses UDP-N-acetyl-alpha-D-muramoyl-L-alanyl-gamma-D-glutamyl-meso-2,6-diaminopimeloyl-D-alanyl-D-alanine + di-trans,octa-cis-undecaprenyl phosphate = di-trans,octa-cis-undecaprenyl diphospho-N-acetyl-alpha-D-muramoyl-L-alanyl-D-glutamyl-meso-2,6-diaminopimeloyl-D-alanyl-D-alanine + UMP. Its pathway is cell wall biogenesis; peptidoglycan biosynthesis. Functionally, catalyzes the initial step of the lipid cycle reactions in the biosynthesis of the cell wall peptidoglycan: transfers peptidoglycan precursor phospho-MurNAc-pentapeptide from UDP-MurNAc-pentapeptide onto the lipid carrier undecaprenyl phosphate, yielding undecaprenyl-pyrophosphoryl-MurNAc-pentapeptide, known as lipid I. The chain is Phospho-N-acetylmuramoyl-pentapeptide-transferase from Chlamydia pneumoniae (Chlamydophila pneumoniae).